Here is a 123-residue protein sequence, read N- to C-terminus: MAKKGNISSRNLRISDQIQKDLAEMIQRELRDPRLGLVTLQSVTLTPDYAHAKVYFTVLGADAAETEAILNEKAGYLHSLLFKRLHIHTVPTLHFHHDTSVEHAIEMSRLINEANATRSKDED.

The protein belongs to the RbfA family. As to quaternary structure, monomer. Binds 30S ribosomal subunits, but not 50S ribosomal subunits or 70S ribosomes.

Its subcellular location is the cytoplasm. Its function is as follows. One of several proteins that assist in the late maturation steps of the functional core of the 30S ribosomal subunit. Associates with free 30S ribosomal subunits (but not with 30S subunits that are part of 70S ribosomes or polysomes). Required for efficient processing of 16S rRNA. May interact with the 5'-terminal helix region of 16S rRNA. This Cupriavidus taiwanensis (strain DSM 17343 / BCRC 17206 / CCUG 44338 / CIP 107171 / LMG 19424 / R1) (Ralstonia taiwanensis (strain LMG 19424)) protein is Ribosome-binding factor A.